Consider the following 152-residue polypeptide: Xanthine-guanine phosphoribosyltransferase (152 aa).

5-phospho-alpha-D-ribose 1-diphosphate is bound by residues Arg-37–Gly-38 and Asp-88–Thr-96. A Mg(2+)-binding site is contributed by Asp-89. Residues Asp-92 and Ile-135 each contribute to the guanine site. 2 residues coordinate xanthine: Asp-92 and Ile-135. Residues Asp-92–Thr-96 and Trp-134–Ile-135 each bind GMP.

The protein belongs to the purine/pyrimidine phosphoribosyltransferase family. XGPT subfamily. In terms of assembly, homotetramer. Requires Mg(2+) as cofactor.

Its subcellular location is the cell inner membrane. The enzyme catalyses GMP + diphosphate = guanine + 5-phospho-alpha-D-ribose 1-diphosphate. It catalyses the reaction XMP + diphosphate = xanthine + 5-phospho-alpha-D-ribose 1-diphosphate. The catalysed reaction is IMP + diphosphate = hypoxanthine + 5-phospho-alpha-D-ribose 1-diphosphate. It participates in purine metabolism; GMP biosynthesis via salvage pathway; GMP from guanine: step 1/1. The protein operates within purine metabolism; XMP biosynthesis via salvage pathway; XMP from xanthine: step 1/1. Its function is as follows. Purine salvage pathway enzyme that catalyzes the transfer of the ribosyl-5-phosphate group from 5-phospho-alpha-D-ribose 1-diphosphate (PRPP) to the N9 position of the 6-oxopurines guanine and xanthine to form the corresponding ribonucleotides GMP (guanosine 5'-monophosphate) and XMP (xanthosine 5'-monophosphate), with the release of PPi. To a lesser extent, also acts on hypoxanthine. The sequence is that of Xanthine-guanine phosphoribosyltransferase from Yersinia enterocolitica serotype O:8 / biotype 1B (strain NCTC 13174 / 8081).